The primary structure comprises 89 residues: Small ribosomal subunit protein uS15 (89 aa).

Belongs to the universal ribosomal protein uS15 family. Part of the 30S ribosomal subunit. Forms a bridge to the 50S subunit in the 70S ribosome, contacting the 23S rRNA.

One of the primary rRNA binding proteins, it binds directly to 16S rRNA where it helps nucleate assembly of the platform of the 30S subunit by binding and bridging several RNA helices of the 16S rRNA. In terms of biological role, forms an intersubunit bridge (bridge B4) with the 23S rRNA of the 50S subunit in the ribosome. In Corynebacterium aurimucosum (strain ATCC 700975 / DSM 44827 / CIP 107346 / CN-1) (Corynebacterium nigricans), this protein is Small ribosomal subunit protein uS15.